A 78-amino-acid polypeptide reads, in one-letter code: Acyl carrier protein (78 aa).

A Carrier domain is found at 2-77 (SDIAERVKKI…DAIKFLEKNA (76 aa)). The residue at position 37 (Ser-37) is an O-(pantetheine 4'-phosphoryl)serine.

The protein belongs to the acyl carrier protein (ACP) family. In terms of processing, 4'-phosphopantetheine is transferred from CoA to a specific serine of apo-ACP by AcpS. This modification is essential for activity because fatty acids are bound in thioester linkage to the sulfhydryl of the prosthetic group.

The protein resides in the cytoplasm. The protein operates within lipid metabolism; fatty acid biosynthesis. Carrier of the growing fatty acid chain in fatty acid biosynthesis. This chain is Acyl carrier protein, found in Xanthobacter autotrophicus (strain ATCC BAA-1158 / Py2).